Here is a 596-residue protein sequence, read N- to C-terminus: Elongation factor 4 (596 aa).

In terms of domain architecture, tr-type G spans lysine 2 to lysine 183. GTP-binding positions include aspartate 14–threonine 19 and asparagine 130–aspartate 133.

The protein belongs to the TRAFAC class translation factor GTPase superfamily. Classic translation factor GTPase family. LepA subfamily.

The protein resides in the cell inner membrane. It catalyses the reaction GTP + H2O = GDP + phosphate + H(+). Required for accurate and efficient protein synthesis under certain stress conditions. May act as a fidelity factor of the translation reaction, by catalyzing a one-codon backward translocation of tRNAs on improperly translocated ribosomes. Back-translocation proceeds from a post-translocation (POST) complex to a pre-translocation (PRE) complex, thus giving elongation factor G a second chance to translocate the tRNAs correctly. Binds to ribosomes in a GTP-dependent manner. The chain is Elongation factor 4 from Campylobacter lari (strain RM2100 / D67 / ATCC BAA-1060).